Here is a 492-residue protein sequence, read N- to C-terminus: GTPase Der (492 aa).

EngA-type G domains follow at residues Phe-3 to Ala-167 and Leu-201 to Asn-381. Residues Gly-9–Ser-16, Asp-56–Leu-60, Asn-119–Glu-122, Gly-207–Ser-214, Asp-259–Met-263, and Asn-324–Asp-327 contribute to the GTP site. The region spanning Arg-382–Ala-468 is the KH-like domain. Residues Met-462–Asp-492 form a disordered region. Residues Lys-472 to Asp-492 are compositionally biased toward basic residues.

The protein belongs to the TRAFAC class TrmE-Era-EngA-EngB-Septin-like GTPase superfamily. EngA (Der) GTPase family. As to quaternary structure, associates with the 50S ribosomal subunit.

Its function is as follows. GTPase that plays an essential role in the late steps of ribosome biogenesis. The polypeptide is GTPase Der (Roseobacter denitrificans (strain ATCC 33942 / OCh 114) (Erythrobacter sp. (strain OCh 114))).